The primary structure comprises 831 residues: Maltodextrin phosphorylase (831 aa).

Position 592 is an N6-(pyridoxal phosphate)lysine (K592).

The protein belongs to the glycogen phosphorylase family. As to quaternary structure, trimer (at 25 degrees Celsius). Pyridoxal 5'-phosphate serves as cofactor.

The enzyme catalyses [(1-&gt;4)-alpha-D-glucosyl](n) + phosphate = [(1-&gt;4)-alpha-D-glucosyl](n-1) + alpha-D-glucose 1-phosphate. Phosphorylase is an important allosteric enzyme in carbohydrate metabolism. Catalyzes the phospholytic cleavage of maltodextrins with a minimal chain length of five glucose residues to yield glucose-1-phosphate. Low activity with tetraose and no activity with triose and maltose. Long maltodextrins (8 to 15 glucose units), amylose and starch are not as good substrates as maltoheptaose. The sequence is that of Maltodextrin phosphorylase (malP) from Thermococcus litoralis (strain ATCC 51850 / DSM 5473 / JCM 8560 / NS-C).